The primary structure comprises 138 residues: MAKSIPRISSRRNGPIGSGKTVRRIPKGVIHVQASFHNTIVAVTDVRGRVVSWSSAGTSGFKGTRRGTPFAAQTAATKAIRTVVDQGMLRAEVLIKGPGLGRDAALRAIRRSGILLTFVRDVTPMPHNGCRPPKKRRV.

The interval 1–22 (MAKSIPRISSRRNGPIGSGKTV) is disordered.

It belongs to the universal ribosomal protein uS11 family. As to quaternary structure, part of the 30S ribosomal subunit.

Its subcellular location is the plastid. This Cuscuta exaltata (Tall dodder) protein is Small ribosomal subunit protein uS11c.